The chain runs to 24 residues: Waglerin-3 (24 aa).

A compositionally biased stretch (basic and acidic residues) spans 1–10 (SLGGKPDLRP). Residues 1 to 24 (SLGGKPDLRPCHPPCHYIPRPKPR) form a disordered region. An intrachain disulfide couples C11 to C15.

It belongs to the waglerin family. Waglerin-1 is monomeric. In terms of processing, amidation of the waglerin-1 C-terminus increases the affinity by 2-fold. As to expression, expressed by the venom gland.

It is found in the secreted. Waglerin-1 selectively blocks the epsilon subunit of muscle nicotinic acetylcholine receptor (nAChR). Also has effects on rodent ionotropic GABA(A) receptors (GABR), since it potentiates I(GABA) in some neurons and depresses I(GABA) in others. In mice, it elicits tachypnea, ocular proptosis, rapid collapse and spasms, whereas no toxic effects on respiration and blood pressure are observed in rats. Its function is as follows. Waglerin-3 selectively blocks the epsilon subunit of muscle nicotinic acetylcholine receptor (nAChR). It elicits tachypnea, ocular proptosis, rapid collapse and spasms in mice. It causes death by respiratory failure. This chain is Waglerin-3, found in Tropidolaemus wagleri (Wagler's pit viper).